Consider the following 220-residue polypeptide: NADH-quinone oxidoreductase subunit B (220 aa).

Positions 37, 38, 103, and 132 each coordinate [4Fe-4S] cluster. The tract at residues 174-220 (PSSERYAPKNRSQRKLAERQQAAQRREMGAEKPLGALEERAELNAGR) is disordered. The span at 210–220 (LEERAELNAGR) shows a compositional bias: basic and acidic residues.

The protein belongs to the complex I 20 kDa subunit family. As to quaternary structure, NDH-1 is composed of 14 different subunits. Subunits NuoB, C, D, E, F, and G constitute the peripheral sector of the complex. It depends on [4Fe-4S] cluster as a cofactor.

It localises to the cell membrane. The catalysed reaction is a quinone + NADH + 5 H(+)(in) = a quinol + NAD(+) + 4 H(+)(out). NDH-1 shuttles electrons from NADH, via FMN and iron-sulfur (Fe-S) centers, to quinones in the respiratory chain. The immediate electron acceptor for the enzyme in this species is believed to be a menaquinone. Couples the redox reaction to proton translocation (for every two electrons transferred, four hydrogen ions are translocated across the cytoplasmic membrane), and thus conserves the redox energy in a proton gradient. The protein is NADH-quinone oxidoreductase subunit B of Saccharopolyspora erythraea (strain ATCC 11635 / DSM 40517 / JCM 4748 / NBRC 13426 / NCIMB 8594 / NRRL 2338).